A 301-amino-acid polypeptide reads, in one-letter code: Glycine--tRNA ligase alpha subunit (301 aa).

It belongs to the class-II aminoacyl-tRNA synthetase family. In terms of assembly, tetramer of two alpha and two beta subunits.

It is found in the cytoplasm. The catalysed reaction is tRNA(Gly) + glycine + ATP = glycyl-tRNA(Gly) + AMP + diphosphate. The sequence is that of Glycine--tRNA ligase alpha subunit from Neisseria meningitidis serogroup C (strain 053442).